The sequence spans 237 residues: Chaplin-B (237 aa).

A signal peptide spans 1–26 (MRRVTRNGVLAVAASGALAVTMPAYA). The region spanning 42 to 82 (SPGLISGNTVQLPVDVPVDVCGNTVNVVGLLNPAAGNGCAD) is the Chaplin 1 domain. Disordered stretches follow at residues 81-127 (ADSG…LSGN) and 148-216 (GIGN…TLAG). Positions 101-115 (GSATEATSGGAAAEG) are enriched in low complexity. The 41-residue stretch at 120 to 160 (SPGVLSGNGVQLPVHLPVNVSGNSVNVVGIGNPAVGNESTN) folds into the Chaplin 2 domain. A compositionally biased stretch (pro residues) spans 169–178 (VRPPAEPEPS). Positions 202 to 206 (LAHTG) match the LPXTG sorting signal motif. At T205 the chain carries Pentaglycyl murein peptidoglycan amidated threonine. Residues 206 to 237 (GTDRTLPTLAGGAALVLGGTVLYRRFRPGSGD) constitute a propeptide, removed by sortase.

The protein belongs to the chaplin family. Long chaplin subfamily.

It is found in the secreted. The protein resides in the cell wall. One of 8 partially redundant surface-active proteins required for efficient formation of aerial mycelium; the short chaplins assemble into a hydrophobic, amyloidal fibrillar surface layer that envelopes and protects aerial hyphae and spores, presumably anchored to the long chaplins. Chaplins have an overlapping function with the surface-active SapB peptide; chaplins are essential on minimal medium while on rich medium both chaplins and SapB are required for efficient aerial hyphae formation. The long chaplins (ChpA, ChpB, ChpC) are not absolutely necessary for short chaplin localization or rodlet formation, but probably play a role in initiating aerial hyphae development. Chaplins are also involved in cell attachment to a hydrophobic surface. The sequence is that of Chaplin-B from Streptomyces coelicolor (strain ATCC BAA-471 / A3(2) / M145).